The sequence spans 291 residues: 3-hydroxy-5-phosphonooxypentane-2,4-dione thiolase (291 aa).

Lys203 serves as the catalytic Schiff-base intermediate with substrate.

Belongs to the DeoC/FbaB aldolase family. In terms of assembly, homodecamer.

It localises to the cytoplasm. The catalysed reaction is dihydroxyacetone phosphate + acetyl-CoA = 3-hydroxy-2,4-dioxopentyl phosphate + CoA. Functionally, involved in the degradation of phospho-AI-2, thereby terminating induction of the lsr operon and closing the AI-2 signaling cycle. Catalyzes the transfer of an acetyl moiety from 3-hydroxy-5-phosphonooxypentane-2,4-dione to CoA to form glycerone phosphate and acetyl-CoA. The protein is 3-hydroxy-5-phosphonooxypentane-2,4-dione thiolase of Escherichia coli O139:H28 (strain E24377A / ETEC).